A 274-amino-acid chain; its full sequence is NAD kinase (274 aa).

Residue Asp59 is the Proton acceptor of the active site. Residues 59-60, 133-134, Arg144, Asp163, 174-179, and Gln233 each bind NAD(+); these read DG, ND, and TAYALS.

Belongs to the NAD kinase family. A divalent metal cation serves as cofactor.

It localises to the cytoplasm. The catalysed reaction is NAD(+) + ATP = ADP + NADP(+) + H(+). Its function is as follows. Involved in the regulation of the intracellular balance of NAD and NADP, and is a key enzyme in the biosynthesis of NADP. Catalyzes specifically the phosphorylation on 2'-hydroxyl of the adenosine moiety of NAD to yield NADP. In Aquifex aeolicus (strain VF5), this protein is NAD kinase.